We begin with the raw amino-acid sequence, 54 residues long: Low temperature-induced protein lt101.2 (54 aa).

Transmembrane regions (helical) follow at residues 2–22 (ASATFIEVILAIILPPVGVFL) and 34–54 (LLLTLLGYIPGIIYAVYVLVA).

This sequence belongs to the UPF0057 (PMP3) family.

It localises to the membrane. In Hordeum vulgare (Barley), this protein is Low temperature-induced protein lt101.2 (LT101.2).